A 108-amino-acid polypeptide reads, in one-letter code: FK506-binding protein 1A (108 aa).

A disordered region spans residues 1 to 20; that stretch reads MGVEVQRISPGDGKNFPKPG. Residues 20-108 enclose the PPIase FKBP-type domain; the sequence is GDTVSIHYTG…TFEVELLKIN (89 aa).

This sequence belongs to the FKBP-type PPIase family. FKBP1 subfamily.

Its subcellular location is the cytoplasm. The catalysed reaction is [protein]-peptidylproline (omega=180) = [protein]-peptidylproline (omega=0). Inhibited by both FK506 and rapamycin. Its function is as follows. PPIases accelerate the folding of proteins. It catalyzes the cis-trans isomerization of proline imidic peptide bonds in oligopeptides. The chain is FK506-binding protein 1A (fprA) from Emericella nidulans (strain FGSC A4 / ATCC 38163 / CBS 112.46 / NRRL 194 / M139) (Aspergillus nidulans).